Consider the following 189-residue polypeptide: HTH-type transcriptional repressor LfrR (189 aa).

Residues 12–70 form the HTH tetR-type domain; that stretch reads ERTRRAILDAAMLVLADHPTAALGDIAAAAGVGRSTVHRYYPERTDLLRALARHVHDLS. Positions 33 to 52 form a DNA-binding region, H-T-H motif; that stretch reads ALGDIAAAAGVGRSTVHRYY. The proflavine binding stretch occupies residues 70-71; it reads SN.

As to quaternary structure, homodimer. Forms a structurally asymmetric homodimer exhibiting local unfolding and a blocked drug-binding site.

Repressor activity is regulated by binding of different substrates of the LfrA multidrug efflux pump, such as acriflavine, proflavine, ethidium bromide and rhodamine 123. Binding of these ligands causes the dissociation of LfrR from the promoter, inducing lfrA expression. Represses the transcription of the lfrRA operon by binding directly to the promoter region of lfrR-lfrA. Binds specifically to a 143-bp region upstream of the lfrR gene. The chain is HTH-type transcriptional repressor LfrR from Mycolicibacterium smegmatis (strain ATCC 700084 / mc(2)155) (Mycobacterium smegmatis).